Reading from the N-terminus, the 467-residue chain is ATP synthase subunit beta (467 aa).

An ATP-binding site is contributed by 153–160; sequence GGAGVGKT.

The protein belongs to the ATPase alpha/beta chains family. As to quaternary structure, F-type ATPases have 2 components, CF(1) - the catalytic core - and CF(0) - the membrane proton channel. CF(1) has five subunits: alpha(3), beta(3), gamma(1), delta(1), epsilon(1). CF(0) has three main subunits: a(1), b(2) and c(9-12). The alpha and beta chains form an alternating ring which encloses part of the gamma chain. CF(1) is attached to CF(0) by a central stalk formed by the gamma and epsilon chains, while a peripheral stalk is formed by the delta and b chains.

The protein localises to the cell membrane. The catalysed reaction is ATP + H2O + 4 H(+)(in) = ADP + phosphate + 5 H(+)(out). Functionally, produces ATP from ADP in the presence of a proton gradient across the membrane. The catalytic sites are hosted primarily by the beta subunits. This chain is ATP synthase subunit beta, found in Lactiplantibacillus plantarum (strain ATCC BAA-793 / NCIMB 8826 / WCFS1) (Lactobacillus plantarum).